The sequence spans 634 residues: Phospholipase B (634 aa).

A signal peptide spans 1–19 (MSIITTAFALSLLATTAFA). In terms of domain architecture, PLA2c spans 46 to 569 (DCPSNVTWIR…DTWCWAGDDN (524 aa)). N-linked (GlcNAc...) asparagine glycans are attached at residues N50, N56, N122, N231, N246, N269, N311, N340, N384, N430, N478, N498, N525, N550, N569, N591, and N603.

The protein belongs to the lysophospholipase family. Post-translationally, N-glycosylated.

It is found in the secreted. The enzyme catalyses a 1-acyl-sn-glycero-3-phosphocholine + H2O = sn-glycerol 3-phosphocholine + a fatty acid + H(+). Functionally, exhibits phospholipase B (PLB), lysophospholipase (LPL) and lysophospholipase/transacylase (LPTA) activities. The chain is Phospholipase B (PLB1) from Cryptococcus neoformans var. neoformans serotype D (strain JEC21 / ATCC MYA-565) (Filobasidiella neoformans).